A 303-amino-acid polypeptide reads, in one-letter code: Pseudouridine-5'-phosphate glycosidase (303 aa).

E24 (proton donor) is an active-site residue. K85 and V105 together coordinate substrate. D137 serves as a coordination point for Mn(2+). 139–141 (SAD) contacts substrate. The Nucleophile role is filled by K158.

It belongs to the pseudouridine-5'-phosphate glycosidase family. In terms of assembly, homotrimer. It depends on Mn(2+) as a cofactor.

The enzyme catalyses D-ribose 5-phosphate + uracil = psi-UMP + H2O. Its function is as follows. Catalyzes the reversible cleavage of pseudouridine 5'-phosphate (PsiMP) to ribose 5-phosphate and uracil. Functions biologically in the cleavage direction, as part of a pseudouridine degradation pathway. The sequence is that of Pseudouridine-5'-phosphate glycosidase from Herpetosiphon aurantiacus (strain ATCC 23779 / DSM 785 / 114-95).